Reading from the N-terminus, the 157-residue chain is Protein-export protein SecB (157 aa).

Belongs to the SecB family. As to quaternary structure, homotetramer, a dimer of dimers. One homotetramer interacts with 1 SecA dimer.

It localises to the cytoplasm. In terms of biological role, one of the proteins required for the normal export of preproteins out of the cell cytoplasm. It is a molecular chaperone that binds to a subset of precursor proteins, maintaining them in a translocation-competent state. It also specifically binds to its receptor SecA. This is Protein-export protein SecB from Tolumonas auensis (strain DSM 9187 / NBRC 110442 / TA 4).